Reading from the N-terminus, the 266-residue chain is Small ribosomal subunit protein uS3m (266 aa).

It belongs to the universal ribosomal protein uS3 family.

The protein resides in the mitochondrion. In Mycosarcoma maydis (Corn smut fungus), this protein is Small ribosomal subunit protein uS3m (MRPS3).